Here is a 156-residue protein sequence, read N- to C-terminus: Ribosomal RNA large subunit methyltransferase H (156 aa).

Residues Leu-73, Gly-104, and 123-128 each bind S-adenosyl-L-methionine; that span reads LSALTL.

This sequence belongs to the RNA methyltransferase RlmH family. Homodimer.

The protein localises to the cytoplasm. It catalyses the reaction pseudouridine(1915) in 23S rRNA + S-adenosyl-L-methionine = N(3)-methylpseudouridine(1915) in 23S rRNA + S-adenosyl-L-homocysteine + H(+). In terms of biological role, specifically methylates the pseudouridine at position 1915 (m3Psi1915) in 23S rRNA. This is Ribosomal RNA large subunit methyltransferase H from Shewanella denitrificans (strain OS217 / ATCC BAA-1090 / DSM 15013).